The sequence spans 161 residues: Protein-export protein SecB (161 aa).

The disordered stretch occupies residues 141-161; the sequence is KKQQETAGEQPDQPADTITRH.

The protein belongs to the SecB family. Homotetramer, a dimer of dimers. One homotetramer interacts with 1 SecA dimer.

It is found in the cytoplasm. In terms of biological role, one of the proteins required for the normal export of preproteins out of the cell cytoplasm. It is a molecular chaperone that binds to a subset of precursor proteins, maintaining them in a translocation-competent state. It also specifically binds to its receptor SecA. The chain is Protein-export protein SecB from Nitrosomonas europaea (strain ATCC 19718 / CIP 103999 / KCTC 2705 / NBRC 14298).